The sequence spans 124 residues: Small ribosomal subunit protein uS12 (124 aa).

Aspartate 89 is subject to 3-methylthioaspartic acid.

The protein belongs to the universal ribosomal protein uS12 family. In terms of assembly, part of the 30S ribosomal subunit. Contacts proteins S8 and S17. May interact with IF1 in the 30S initiation complex.

Functionally, with S4 and S5 plays an important role in translational accuracy. Its function is as follows. Interacts with and stabilizes bases of the 16S rRNA that are involved in tRNA selection in the A site and with the mRNA backbone. Located at the interface of the 30S and 50S subunits, it traverses the body of the 30S subunit contacting proteins on the other side and probably holding the rRNA structure together. The combined cluster of proteins S8, S12 and S17 appears to hold together the shoulder and platform of the 30S subunit. The protein is Small ribosomal subunit protein uS12 of Shewanella piezotolerans (strain WP3 / JCM 13877).